The chain runs to 180 residues: Decaprenylphosphoryl-5-phosphoribose phosphatase (180 aa).

A run of 4 helical transmembrane segments spans residues 31 to 51 (ALSH…AGAL), 61 to 81 (LAVG…KRVV), 116 to 136 (VLLA…PMAL), and 139 to 159 (LVLG…GALV).

Belongs to the PA-phosphatase related phosphoesterase family.

Its subcellular location is the cell membrane. It catalyses the reaction trans,octa-cis-decaprenylphospho-beta-D-ribofuranose 5-phosphate + H2O = trans,octa-cis-decaprenylphospho-beta-D-ribofuranose + phosphate. It participates in cell wall biogenesis; cell wall polysaccharide biosynthesis. Its function is as follows. Phosphatase involved in the biosynthesis of decaprenylphosphoryl arabinose (DPA), which serves as the arabinose donor for the biosynthesis of arabinogalactan, the major mycobacterial cell wall polysaccharide. Catalyzes the dephosphorylation of decaprenylphosphoryl-5-phosphoribose (DPPR) to decaprenyl-phosphoribose (DPR). The polypeptide is Decaprenylphosphoryl-5-phosphoribose phosphatase (Mycolicibacterium smegmatis (strain ATCC 700084 / mc(2)155) (Mycobacterium smegmatis)).